Reading from the N-terminus, the 1028-residue chain is Beta-galactosidase (1028 aa).

Substrate contacts are provided by Asn-104 and Asp-203. Asp-203 serves as a coordination point for Na(+). Mg(2+)-binding residues include Glu-418, His-420, and Glu-463. Residues Glu-463 and 539 to 542 each bind substrate; that span reads EYAH. Catalysis depends on Glu-463, which acts as the Proton donor. The active-site Nucleophile is Glu-539. A Mg(2+)-binding site is contributed by Asn-599. The Na(+) site is built by Phe-603 and Asn-606. Residues Asn-606 and Trp-1003 each contribute to the substrate site.

The protein belongs to the glycosyl hydrolase 2 family. Homotetramer. The cofactor is Mg(2+). Requires Na(+) as cofactor.

The catalysed reaction is Hydrolysis of terminal non-reducing beta-D-galactose residues in beta-D-galactosides.. The chain is Beta-galactosidase from Enterobacter cloacae.